The primary structure comprises 295 residues: Protoheme IX farnesyltransferase (295 aa).

9 helical membrane passes run 27–47 (LVVF…HPFL), 48–68 (ALIS…INMW), 94–114 (SALE…AIAV), 117–137 (ISAA…TIWL), 144–164 (NIVI…AVVT), 171–191 (SFIL…ALSL), 216–236 (KHIL…ALFL), 241–261 (FYLS…ISVI), and 272–292 (MFSY…FCSI).

It belongs to the UbiA prenyltransferase family. Protoheme IX farnesyltransferase subfamily.

The protein resides in the cell membrane. The enzyme catalyses heme b + (2E,6E)-farnesyl diphosphate + H2O = Fe(II)-heme o + diphosphate. It participates in porphyrin-containing compound metabolism; heme O biosynthesis; heme O from protoheme: step 1/1. Converts heme B (protoheme IX) to heme O by substitution of the vinyl group on carbon 2 of heme B porphyrin ring with a hydroxyethyl farnesyl side group. This Wolbachia pipientis subsp. Culex pipiens (strain wPip) protein is Protoheme IX farnesyltransferase.